A 570-amino-acid polypeptide reads, in one-letter code: MFSFFFSFYALSVIFSLLFKHFLSSKGVFLLNTTSIGLFWAYSLSNLNLFFIKNKLIAIHLFRWFPLSAGYLVNFSFYIDTVAYSFTLLTLTIGVFVNLYTYSYFRYEPHISRLISLINAFIASMIILVNSGNLVVFFFGWELIGITSFFLINFWGERAPTFKSAFKAFSFNKFSDSAVLIALILIYANVHDLNFEAILNVSHLYSEMKLGSTPQINSWNLISFCLLFAAFVKSAQFGFHVWLPDSMEAPVPASALIHSATLVSAGVFLIMRFYPILELSLYFKLVTALVGALTALAGGLSAVFQTDLKKILAYSTISHCGFLIFLCSFGNFKLVIVYLFVHGFFKAISFLCVGNLIRFSKSYQDLRRMGSFFKYLPAEFFFLVFSLLNLSGLPFFFGFYSKTLLFMISDVLYFRDAIFCMILLSCITGLFYSFNILYYSFFDSKKARKSIYAGVISEYLRSYYYSNTTMASNIAIFLLIVSSCLLCAYLINFYLLSLSTATDFYLVYVKTFSFTLAPLSEAALLNYSFFYWIIAIFFVILVLFSYYQKKTTAEVSLAGFFDFFLGGFFF.

16 consecutive transmembrane segments (helical) span residues 2–22, 27–47, 56–76, 77–97, 109–129, 134–154, 179–199, 221–241, 251–271, 285–305, 311–330, 335–357, 380–400, 417–437, 476–496, and 524–544; these read FSFF…FKHF, GVFL…LSNL, LIAI…VNFS, FYID…GVFV, PHIS…IILV, LVVF…LINF, VLIA…EAIL, LISF…GFHV, VPAS…FLIM, LVTA…AVFQ, ILAY…CSFG, VIVY…GNLI, FFFL…FGFY, AIFC…FNIL, IFLL…FYLL, and LLNY…LVLF.

It belongs to the complex I subunit 5 family.

It is found in the mitochondrion inner membrane. It catalyses the reaction a ubiquinone + NADH + 5 H(+)(in) = a ubiquinol + NAD(+) + 4 H(+)(out). Its function is as follows. Core subunit of the mitochondrial membrane respiratory chain NADH dehydrogenase (Complex I) that is believed to belong to the minimal assembly required for catalysis. Complex I functions in the transfer of electrons from NADH to the respiratory chain. The immediate electron acceptor for the enzyme is believed to be ubiquinone. This is NADH-ubiquinone oxidoreductase chain 5 (ND5) from Paramecium tetraurelia.